Here is a 1430-residue protein sequence, read N- to C-terminus: MSRPSSVSPRQPAPGGGGGGGPSPCGPGGGGRAKGLKDIRIDEEVKIAVNIALERFRYGDQREMEFPSSLTSTERAFIHRLSQSLGLVSKSKGKGANRYLTVKKKDGSETAHAMMTCNLTHNTKHAVRSLIQRFPVTNKERTELLPKTERGNVFAVEAENREMSKTSGRLNNGIPQIPVKRGESEFDSFRQSLPVFEKQEEIVKIIKENKVVLIVGETGSGKTTQIPQFLLDDCFKNGIPCRIFCTQPRRLAAIAVAERVAAERRERIGQTIGYQIRLESRVSPKTLLTFCTNGVLLRTLMAGDSTLSTVTHVIVDEVHERDRFSDFLLTKLRDLLQKHPTLKLILSSAALDVNLFIRYFGSCPVIYIQGRPFEVKEMFLEDILRTTGYTNKEMLKYKKEKQQEEKQQTTLTEWYSAQENSFKPESQRQRTVLNVTDEYDLLDDGGDAVFSQLTEKDVNCLEPWLIKEMDACLSDIWLHKDIDAFAQVFHLILTENVSVDYRHSETSATALMVAAGRGFASQVEQLISMGANVHSKASNGWMALDWAKHFGQTEIVDLLESYSATLEFGNLDESSLVQTNGSDLSAEDRELLKAYHHSFDDEKVDLDLIMHLLYNICHSCDAGAVLIFLPGYDEIVGLRDRILFDDKRFADSTHRYQVFMLHSNMQTSDQKKVLKNPPAGVRKIILSTNIAETSITVNDVVFVIDSGKVKEKSFDALNFVTMLKMVWISKASAIQRKGRAGRCRPGICFRLFSRLRFQNMLEFQTPELLRMPLQELCLHTKLLAPVNCPIADFLMKAPEPPPALIVRNAVQMLKTIDAMDTWEDLTELGYHLADLPVEPHLGKMVLCAVVLKCLDPILTIACTLAYRDPFVLPTQASQKRAAMLCRKRFTAGAFSDHMALLRAFQAWQKARSDGWERAFCEKNFLSQATMEIIIGMRTQLLGQLRASGFVRARGGGDIRDVNTNSENWAVVKAALVAGMYPNLVHVDRENLVLTGPKEKKVRFHPASVLSQPQYKKIPPANGQAAAIKALPTDWLIYDEMTRAHRIANIRCCSAVTPVTILVFCGPARLASNALQEPSSFRVDGIPNDSSDSEMEDKTTANLAALKLDEWLHFTLEPEAASLLLQLRQKWHSLFLRRMRAPSKPWSQVDEATIRAIIAVLSTEEQSAGLQQPSGIGQRPRPMSSEELPLASSWRSNNSRKSSADTEFSDECTTAERVLMKSPSPALHPPQKYKDRGILHPKRGTEDRSDQSSLKSTDSSSYPSPCASPSPPSSGKGSKSPSPRPNMPVRYFIMKSSNLRNLEISQQKGIWSTTPSNERKLNRAFWESSIVYLVFSVQGSGHFQGFSRMSSEIGREKSQDWGSAGLGGVFKVEWIRKESLPFQFAHHLLNPWNDNKKVQISRDGQELEPLVGEQLLQLWERLPLGEKNTTD.

The tract at residues 1–37 (MSRPSSVSPRQPAPGGGGGGGPSPCGPGGGGRAKGLK) is disordered. The span at 14–33 (PGGGGGGGPSPCGPGGGGRA) shows a compositional bias: gly residues. The R3H domain occupies 38–106 (DIRIDEEVKI…NRYLTVKKKD (69 aa)). In terms of domain architecture, Helicase ATP-binding spans 203 to 369 (VKIIKENKVV…FGSCPVIYIQ (167 aa)). 216–223 (GETGSGKT) provides a ligand contact to ATP. The short motif at 316-319 (DEVH) is the DEAH box element. ANK repeat units lie at residues 506 to 538 (TSAT…SKAS) and 539 to 571 (NGWM…FGNL). The 173-residue stretch at 612-784 (LLYNICHSCD…ELCLHTKLLA (173 aa)) folds into the Helicase C-terminal domain. 3 positions are modified to phosphoserine: Ser1089, Ser1090, and Ser1092. Over residues 1164-1174 (EQSAGLQQPSG) the composition is skewed to polar residues. Positions 1164–1288 (EQSAGLQQPS…SPSPRPNMPV (125 aa)) are disordered. The segment covering 1191 to 1200 (SSWRSNNSRK) has biased composition (low complexity). Ser1202 is modified (phosphoserine). Basic and acidic residues predominate over residues 1231-1249 (KYKDRGILHPKRGTEDRSD). A compositionally biased stretch (low complexity) spans 1250-1264 (QSSLKSTDSSSYPSP). Ser1263, Ser1267, and Ser1281 each carry phosphoserine. The 131-residue stretch at 1288 to 1418 (VRYFIMKSSN…LVGEQLLQLW (131 aa)) folds into the YTH domain. RNA contacts are provided by residues 1294-1296 (KSS), Trp1310, and Trp1360.

It belongs to the DEAD box helicase family. DEAH subfamily. As to quaternary structure, interacts with MEIOC; binds transcripts that regulate the mitotic cell cycle inhibiting progression into metaphase, thereby allowing meiotic prophase to proceed normally. Interacts (via ANK repeats) with XRN1. Interacts with ZCCHC4. Associates with the small ribosomal subunit. Interacts with RBM46. Expressed in testis. Not detected in spermatogonia next to the tubule wall but is strongly expressed in spermatocytes, suggesting that it is up-regulated in germ cells upon entry into meiosis.

The protein resides in the cytoplasm. It localises to the perinuclear region. The catalysed reaction is ATP + H2O = ADP + phosphate + H(+). Its function is as follows. 3'-5' RNA helicase that plays a key role in the male and female germline by promoting transition from mitotic to meiotic divisions in stem cells. Specifically recognizes and binds N6-methyladenosine (m6A)-containing RNAs, a modification present at internal sites of mRNAs and some non-coding RNAs that plays a role in the efficiency of RNA processing and stability. Essential for ensuring a successful progression of the meiotic program in the germline by regulating the level of m6A-containing RNAs. Acts by binding and promoting degradation of m6A-containing mRNAs: the 3'-5' RNA helicase activity is required for this process and RNA degradation may be mediated by XRN1 exoribonuclease. Required for both spermatogenesis and oogenesis. The polypeptide is 3'-5' RNA helicase YTHDC2 (Homo sapiens (Human)).